Here is a 444-residue protein sequence, read N- to C-terminus: Phosphoglucosamine mutase (444 aa).

Serine 102 (phosphoserine intermediate) is an active-site residue. Positions 102, 241, 243, and 245 each coordinate Mg(2+). Phosphoserine is present on serine 102.

The protein belongs to the phosphohexose mutase family. Mg(2+) serves as cofactor. Post-translationally, activated by phosphorylation.

It catalyses the reaction alpha-D-glucosamine 1-phosphate = D-glucosamine 6-phosphate. Functionally, catalyzes the conversion of glucosamine-6-phosphate to glucosamine-1-phosphate. The chain is Phosphoglucosamine mutase from Mannheimia succiniciproducens (strain KCTC 0769BP / MBEL55E).